The primary structure comprises 616 residues: Dihydroxy-acid dehydratase (616 aa).

Residue aspartate 81 participates in Mg(2+) binding. Cysteine 122 lines the [2Fe-2S] cluster pocket. Mg(2+) is bound by residues aspartate 123 and lysine 124. The residue at position 124 (lysine 124) is an N6-carboxylysine. Cysteine 195 serves as a coordination point for [2Fe-2S] cluster. Glutamate 491 is a Mg(2+) binding site. The active-site Proton acceptor is serine 517.

Belongs to the IlvD/Edd family. As to quaternary structure, homodimer. The cofactor is [2Fe-2S] cluster. Mg(2+) is required as a cofactor.

It carries out the reaction (2R)-2,3-dihydroxy-3-methylbutanoate = 3-methyl-2-oxobutanoate + H2O. It catalyses the reaction (2R,3R)-2,3-dihydroxy-3-methylpentanoate = (S)-3-methyl-2-oxopentanoate + H2O. The protein operates within amino-acid biosynthesis; L-isoleucine biosynthesis; L-isoleucine from 2-oxobutanoate: step 3/4. It functions in the pathway amino-acid biosynthesis; L-valine biosynthesis; L-valine from pyruvate: step 3/4. In terms of biological role, functions in the biosynthesis of branched-chain amino acids. Catalyzes the dehydration of (2R,3R)-2,3-dihydroxy-3-methylpentanoate (2,3-dihydroxy-3-methylvalerate) into 2-oxo-3-methylpentanoate (2-oxo-3-methylvalerate) and of (2R)-2,3-dihydroxy-3-methylbutanoate (2,3-dihydroxyisovalerate) into 2-oxo-3-methylbutanoate (2-oxoisovalerate), the penultimate precursor to L-isoleucine and L-valine, respectively. This chain is Dihydroxy-acid dehydratase, found in Salmonella gallinarum (strain 287/91 / NCTC 13346).